The chain runs to 159 residues: Cytochrome c-type biogenesis protein CcmE (159 aa).

Topologically, residues 1–8 (MHPIRKKR) are cytoplasmic. Residues 9-29 (LTIVLFLVAGIAIAVGLTTYA) form a helical; Signal-anchor for type II membrane protein membrane-spanning segment. The Periplasmic segment spans residues 30 to 159 (LRQNINLFYD…VEKAAETTAY (130 aa)). Histidine 124 and tyrosine 128 together coordinate heme. A disordered region spans residues 135–159 (EALERSSKGQHKSADVEKAAETTAY). The segment covering 136–159 (ALERSSKGQHKSADVEKAAETTAY) has biased composition (basic and acidic residues).

It belongs to the CcmE/CycJ family.

It is found in the cell inner membrane. Functionally, heme chaperone required for the biogenesis of c-type cytochromes. Transiently binds heme delivered by CcmC and transfers the heme to apo-cytochromes in a process facilitated by CcmF and CcmH. This chain is Cytochrome c-type biogenesis protein CcmE, found in Marinobacter nauticus (strain ATCC 700491 / DSM 11845 / VT8) (Marinobacter aquaeolei).